A 78-amino-acid chain; its full sequence is uncharacterized protein (78 aa).

2 helical membrane passes run 13 to 35 and 50 to 72; these read AGVG…PTGI and GTTF…FYYF.

Its subcellular location is the cell membrane. This is an uncharacterized protein from Pasteurella multocida (strain Pm70).